The primary structure comprises 111 residues: Resistin-like alpha (111 aa).

The N-terminal stretch at 1 to 23 (MKTATCSLLICVFLLQLMVPVNT) is a signal peptide. 5 cysteine pairs are disulfide-bonded: Cys55-Cys108, Cys67-Cys107, Cys76-Cys93, Cys78-Cys95, and Cys82-Cys97.

The protein belongs to the resistin/FIZZ family. Monomer. Highest levels in adipose tissue.

The protein resides in the secreted. Probable hormone. Plays a role in pulmonary vascular remodeling. The polypeptide is Resistin-like alpha (Retnla) (Rattus norvegicus (Rat)).